The sequence spans 287 residues: IQ domain-containing protein K (287 aa).

In Homo sapiens (Human), this protein is IQ domain-containing protein K (IQCK).